A 347-amino-acid polypeptide reads, in one-letter code: Coproporphyrinogen-III oxidase, aerobic 2 (347 aa).

The disordered stretch occupies residues 1–31 (MGRHSDNSLQESANHTVLLTSPTNTIPKDSR). A compositionally biased stretch (polar residues) spans 7 to 31 (NSLQESANHTVLLTSPTNTIPKDSR). An important for dimerization region spans residues 75–84 (VIREGRVFEQ). S119 serves as a coordination point for substrate. H133 (proton donor) is an active-site residue. Substrate is bound by residues 135-137 (NYR) and 305-310 (KGRTES). The segment at 287-322 (YVEFNLVYDRGTVFGLQTKGRTESILMSLPPLARWE) is important for dimerization.

This sequence belongs to the aerobic coproporphyrinogen-III oxidase family. Homodimer.

The protein resides in the cytoplasm. The enzyme catalyses coproporphyrinogen III + O2 + 2 H(+) = protoporphyrinogen IX + 2 CO2 + 2 H2O. The protein operates within porphyrin-containing compound metabolism; protoporphyrin-IX biosynthesis; protoporphyrinogen-IX from coproporphyrinogen-III (O2 route): step 1/1. Key enzyme in heme biosynthesis. Catalyzes the oxidative decarboxylation of propionic acid side chains of rings A and B of coproporphyrinogen III. The sequence is that of Coproporphyrinogen-III oxidase, aerobic 2 from Nostoc sp. (strain PCC 7120 / SAG 25.82 / UTEX 2576).